The chain runs to 334 residues: Aromatic O-demethylase, reductase subunit (334 aa).

Residues 1–91 form the 2Fe-2S ferredoxin-type domain; it reads MTFAVSVGGR…DTEVRSTADA (91 aa). [2Fe-2S] cluster contacts are provided by Cys-35, Cys-40, Cys-43, and Cys-75. An FAD-binding FR-type domain is found at 98–198; that stretch reads LRDLTATVLE…TGPLGDFHLP (101 aa). FAD is bound by residues 145 to 148, 162 to 164, 170 to 172, Thr-215, Phe-330, and Ser-334; these read RQYS, HVR, and VAT.

In terms of assembly, monomer. Forms a heterodimer with GcoA. FAD serves as cofactor. [2Fe-2S] cluster is required as a cofactor.

The enzyme catalyses 2 oxidized [cytochrome P450] + NADH = 2 reduced [cytochrome P450] + NAD(+) + H(+). It functions in the pathway aromatic compound metabolism. Functionally, part of a two-component P450 system that efficiently O-demethylates diverse aromatic substrates such as guaiacol and a wide variety of lignin-derived monomers. Is likely involved in lignin degradation, allowing Amycolatopsis sp. ATCC 39116 to catabolize plant biomass. GcoB transfers electrons from NADH to the cytochrome P450 subunit GcoA. Highly prefers NADH over NADPH as the electron donor. The chain is Aromatic O-demethylase, reductase subunit from Amycolatopsis sp. (strain ATCC 39116 / 75iv2).